We begin with the raw amino-acid sequence, 452 residues long: MIAAANCLETEKAKLRREIAELQAALNAKEQNLRDLQSRTAASHLDPEADLQHATREQYATLNNDDIARYSRQLILSDFGVSGQLKLKNSAVLIVGLGGLGCPAAQYLCSAGCGNLGLVDYDEVERSNLHRQTLHTVARCGMSKTESARIALLELNPHCRITCYPRLLNSSNAMHIMRAYDIVLDCSDNVATRYLLNDACTMLRKPLVSGSALKLDGQLTVYSYGAQGPCYRCIYPVPPPPEAVTNCGDGGVLGAVTGTIGAMQALEAIKIIIGLGDVLAGRMLIFDGSSCQFRNIKIRSKRPNCHVCSAQPLITGLIDYELFCGMNANDKDNAVKLLEPEERINVLDYQRLMKTKAHLLLDVRAPAEFEICQLPDSINVPLAHVLDDSYLQRFAQQLESKELPIFVVCRRGNDSQIAVQHMRTRLPEHSIRDLEGGLHAWTNQVDQSFPIY.

Residues G99, D120, 127-131, K144, and 188-189 each bind ATP; these read SNLHR and DN. Positions 230 and 233 each coordinate Zn(2+). C247 functions as the Glycyl thioester intermediate; for adenylyltransferase activity in the catalytic mechanism. C305 and C308 together coordinate Zn(2+). One can recognise a Rhodanese domain in the interval 354-450; that stretch reads KTKAHLLLDV…WTNQVDQSFP (97 aa). C409 (cysteine persulfide intermediate; for sulfurtransferase activity) is an active-site residue.

The protein in the N-terminal section; belongs to the HesA/MoeB/ThiF family. UBA4 subfamily. Zn(2+) is required as a cofactor.

It localises to the cytoplasm. The protein localises to the cytosol. It catalyses the reaction [molybdopterin-synthase sulfur-carrier protein]-C-terminal Gly-Gly + ATP + H(+) = [molybdopterin-synthase sulfur-carrier protein]-C-terminal Gly-Gly-AMP + diphosphate. It carries out the reaction [molybdopterin-synthase sulfur-carrier protein]-C-terminal Gly-Gly-AMP + S-sulfanyl-L-cysteinyl-[cysteine desulfurase] + AH2 = [molybdopterin-synthase sulfur-carrier protein]-C-terminal-Gly-aminoethanethioate + L-cysteinyl-[cysteine desulfurase] + A + AMP + 2 H(+). It functions in the pathway tRNA modification; 5-methoxycarbonylmethyl-2-thiouridine-tRNA biosynthesis. It participates in cofactor biosynthesis; molybdopterin biosynthesis. Its function is as follows. Plays a central role in 2-thiolation of mcm(5)S(2)U at tRNA wobble positions of cytosolic tRNA(Lys), tRNA(Glu) and tRNA(Gln). Also essential during biosynthesis of the molybdenum cofactor. Acts by mediating the C-terminal thiocarboxylation of sulfur carriers URM1 and MOCS2A. Its N-terminus first activates URM1 and MOCS2A as acyl-adenylates (-COAMP), then the persulfide sulfur on the catalytic cysteine is transferred to URM1 and MOCS2A to form thiocarboxylation (-COSH) of their C-terminus. The reaction probably involves hydrogen sulfide that is generated from the persulfide intermediate and that acts as a nucleophile towards URM1 and MOCS2A. Subsequently, a transient disulfide bond is formed. Does not use thiosulfate as sulfur donor; NFS1 probably acting as a sulfur donor for thiocarboxylation reactions. This is Adenylyltransferase and sulfurtransferase MOCS3 from Drosophila virilis (Fruit fly).